The sequence spans 89 residues: Large ribosomal subunit protein bL27 (89 aa).

A disordered region spans residues 1–24 (MAHKKGTGSTRNGRDSRSQRLGVK).

It belongs to the bacterial ribosomal protein bL27 family.

The protein is Large ribosomal subunit protein bL27 of Microcystis aeruginosa (strain NIES-843 / IAM M-2473).